The sequence spans 161 residues: Putative 4-hydroxy-4-methyl-2-oxoglutarate aldolase (161 aa).

Substrate is bound by residues 75-78 (GDML) and Arg97. A divalent metal cation is bound at residue Asp98.

Belongs to the class II aldolase/RraA-like family. Homotrimer. The cofactor is a divalent metal cation.

The catalysed reaction is 4-hydroxy-4-methyl-2-oxoglutarate = 2 pyruvate. It catalyses the reaction oxaloacetate + H(+) = pyruvate + CO2. Its function is as follows. Catalyzes the aldol cleavage of 4-hydroxy-4-methyl-2-oxoglutarate (HMG) into 2 molecules of pyruvate. Also contains a secondary oxaloacetate (OAA) decarboxylase activity due to the common pyruvate enolate transition state formed following C-C bond cleavage in the retro-aldol and decarboxylation reactions. The polypeptide is Putative 4-hydroxy-4-methyl-2-oxoglutarate aldolase (Marinomonas sp. (strain MWYL1)).